We begin with the raw amino-acid sequence, 253 residues long: Flagellar brake protein YcgR (253 aa).

The 120-residue stretch at 120–239 folds into the PilZ domain; that stretch reads QRRDFYRFAT…NEGLINRYVY (120 aa).

It belongs to the YcgR family. As to quaternary structure, monomer. Interacts with the flagellar basal bodies.

Its subcellular location is the bacterial flagellum basal body. Functionally, acts as a flagellar brake, regulating swimming and swarming in a bis-(3'-5') cyclic diguanylic acid (c-di-GMP)-dependent manner. Binds 1 c-di-GMP dimer per subunit. Increasing levels of c-di-GMP lead to decreased motility. This Methylotenera mobilis (strain JLW8 / ATCC BAA-1282 / DSM 17540) protein is Flagellar brake protein YcgR.